A 956-amino-acid chain; its full sequence is Translation initiation factor IF-2 (956 aa).

The tract at residues 33-370 (SHASSVEEAD…PVTERKFHEL (338 aa)) is disordered. The span at 46–60 (IASSFSAGVTKNVQA) shows a compositional bias: polar residues. Over residues 63–73 (AKDKQVAEQKA) the composition is skewed to basic and acidic residues. Over residues 76–100 (AKATTPQPAASKAAEKPAAATQEAS) the composition is skewed to low complexity. Composition is skewed to basic and acidic residues over residues 112–125 (FKAE…EQVA), 134–143 (SNDRKSDYRQ), and 179–192 (NDGH…DKNR). Residues 199–213 (RQQDTGRQGQTQAGA) show a composition bias toward low complexity. Composition is skewed to basic and acidic residues over residues 234–258 (ARQR…RQEA) and 266–276 (QTEDKKHREAS). Residues 277-293 (AKATESVASMAAASVAK) are compositionally biased toward low complexity. Residues 303 to 320 (NRPDKGHDRDHGLEDGQK) are compositionally biased toward basic and acidic residues. Over residues 325-343 (SWNSQNQVRNQKNSNWNNN) the composition is skewed to low complexity. The segment covering 344-354 (KKNKKGKHHKN) has biased composition (basic residues). Residues 457–626 (ERAPVVTIMG…LLVAEVEELK (170 aa)) enclose the tr-type G domain. The interval 466 to 473 (GHVDHGKT) is G1. 466 to 473 (GHVDHGKT) contacts GTP. Residues 491 to 495 (GITQH) form a G2 region. A G3 region spans residues 512–515 (DTPG). GTP contacts are provided by residues 512–516 (DTPGH) and 566–569 (NKID). A G4 region spans residues 566–569 (NKID). Residues 602 to 604 (SAK) form a G5 region.

This sequence belongs to the TRAFAC class translation factor GTPase superfamily. Classic translation factor GTPase family. IF-2 subfamily.

The protein localises to the cytoplasm. Functionally, one of the essential components for the initiation of protein synthesis. Protects formylmethionyl-tRNA from spontaneous hydrolysis and promotes its binding to the 30S ribosomal subunits. Also involved in the hydrolysis of GTP during the formation of the 70S ribosomal complex. The chain is Translation initiation factor IF-2 from Streptococcus equi subsp. equi (strain 4047).